A 387-amino-acid polypeptide reads, in one-letter code: Alpha-2B adrenergic receptor (387 aa).

Residues 1–25 form a helical membrane-spanning segment; that stretch reads AIAAVITFLILFTIFGNALVILAVL. At 26–36 the chain is on the cytoplasmic side; that stretch reads TSRSLRAPQNL. Residues 37–62 traverse the membrane as a helical segment; it reads FLVSLAAADILVATLIIPFSLANELL. Residues 63-72 lie on the Extracellular side of the membrane; it reads GYWYFRHTWC. The cysteines at positions 72 and 151 are disulfide-linked. A helical membrane pass occupies residues 73 to 95; it reads XVYLALDVLFCTSSIVHLCAISL. Residues 96-117 are Cytoplasmic-facing; it reads DRYWAVSRALEYNSKRTPRRIK. The chain crosses the membrane as a helical span at residues 118-140; that stretch reads CIILTVWLIAAAISLPPLIYKGD. Residues 141 to 156 are Extracellular-facing; the sequence is QDPQPRGRPQCKLNQE. A helical transmembrane segment spans residues 157-180; sequence AWYILSSSIGSFFVPCLIMILVYL. At 181–351 the chain is on the cytoplasmic side; it reads RIYLIAKRSS…LTREKRFTFV (171 aa). The interval 193-303 is disordered; the sequence is RKPRAKGXPR…VPASPALACS (111 aa). A compositionally biased stretch (acidic residues) spans 279-290; that stretch reads PEEEAEEEEECG. A helical membrane pass occupies residues 352 to 375; it reads LAVVIGVFVLCWFPFFFSYSLGAI. Residues 376-384 are Extracellular-facing; that stretch reads CPQHCKVPH. The chain crosses the membrane as a helical span at residues 385 to 387; the sequence is GLF.

This sequence belongs to the G-protein coupled receptor 1 family. Adrenergic receptor subfamily. ADRA2B sub-subfamily. As to quaternary structure, interacts with RAB26. Interacts with PPP1R9B. Interacts with GGA1, GGA2 and GGA3.

The protein resides in the cell membrane. Functionally, alpha-2 adrenergic receptors mediate the catecholamine-induced inhibition of adenylate cyclase through the action of G proteins. In Macroscelides proboscideus (Short-eared elephant shrew), this protein is Alpha-2B adrenergic receptor (ADRA2B).